We begin with the raw amino-acid sequence, 114 residues long: Large ribosomal subunit protein uL22 (114 aa).

It belongs to the universal ribosomal protein uL22 family. In terms of assembly, part of the 50S ribosomal subunit.

Its function is as follows. This protein binds specifically to 23S rRNA; its binding is stimulated by other ribosomal proteins, e.g. L4, L17, and L20. It is important during the early stages of 50S assembly. It makes multiple contacts with different domains of the 23S rRNA in the assembled 50S subunit and ribosome. The globular domain of the protein is located near the polypeptide exit tunnel on the outside of the subunit, while an extended beta-hairpin is found that lines the wall of the exit tunnel in the center of the 70S ribosome. This is Large ribosomal subunit protein uL22 from Streptococcus thermophilus (strain CNRZ 1066).